Here is a 375-residue protein sequence, read N- to C-terminus: Chaperone protein DnaJ (375 aa).

The J domain maps to 4 to 68 (DYYEVLGVGK…QKRAQYDRFG (65 aa)). Residues 129-211 (GKETDVEIPK…CRGSGRVKVR (83 aa)) form a CR-type zinc finger. The Zn(2+) site is built by cysteine 142, cysteine 145, cysteine 159, cysteine 162, cysteine 185, cysteine 188, cysteine 199, and cysteine 202. CXXCXGXG motif repeat units lie at residues 142-149 (CDTCHGSG), 159-166 (CKTCSGTG), 185-192 (CTTCEGKG), and 199-206 (CSSCRGSG). The segment at 349–375 (LSGEKPGQHGGEDEGFFEKMKRAFRGE) is disordered.

The protein belongs to the DnaJ family. Homodimer. Zn(2+) serves as cofactor.

It localises to the cytoplasm. Participates actively in the response to hyperosmotic and heat shock by preventing the aggregation of stress-denatured proteins and by disaggregating proteins, also in an autonomous, DnaK-independent fashion. Unfolded proteins bind initially to DnaJ; upon interaction with the DnaJ-bound protein, DnaK hydrolyzes its bound ATP, resulting in the formation of a stable complex. GrpE releases ADP from DnaK; ATP binding to DnaK triggers the release of the substrate protein, thus completing the reaction cycle. Several rounds of ATP-dependent interactions between DnaJ, DnaK and GrpE are required for fully efficient folding. Also involved, together with DnaK and GrpE, in the DNA replication of plasmids through activation of initiation proteins. The protein is Chaperone protein DnaJ of Brevibacillus choshinensis.